An 88-amino-acid polypeptide reads, in one-letter code: UPF0297 protein Ccel_2240 (88 aa).

This sequence belongs to the UPF0297 family.

This is UPF0297 protein Ccel_2240 from Ruminiclostridium cellulolyticum (strain ATCC 35319 / DSM 5812 / JCM 6584 / H10) (Clostridium cellulolyticum).